Reading from the N-terminus, the 340-residue chain is CaiB/baiF CoA-transferase family protein ZK892.4 (340 aa).

Asp154 (nucleophile) is an active-site residue.

This sequence belongs to the CoA-transferase III family.

The protein is CaiB/baiF CoA-transferase family protein ZK892.4 of Caenorhabditis elegans.